Here is a 436-residue protein sequence, read N- to C-terminus: Ribulose bisphosphate carboxylase large chain (436 aa).

Substrate is bound by residues Asn-104 and Thr-154. Lys-156 functions as the Proton acceptor in the catalytic mechanism. Lys-158 contributes to the substrate binding site. 3 residues coordinate Mg(2+): Lys-182, Asp-184, and Glu-185. Lys-182 bears the N6-carboxylysine mark. His-275 acts as the Proton acceptor in catalysis. Residues Arg-276, His-308, and Ser-360 each contribute to the substrate site.

The protein belongs to the RuBisCO large chain family. Type I subfamily. As to quaternary structure, heterohexadecamer of 8 large chains and 8 small chains; disulfide-linked. The disulfide link is formed within the large subunit homodimers. Requires Mg(2+) as cofactor. In terms of processing, the disulfide bond which can form in the large chain dimeric partners within the hexadecamer appears to be associated with oxidative stress and protein turnover.

The protein localises to the plastid. The protein resides in the chloroplast. It carries out the reaction 2 (2R)-3-phosphoglycerate + 2 H(+) = D-ribulose 1,5-bisphosphate + CO2 + H2O. The enzyme catalyses D-ribulose 1,5-bisphosphate + O2 = 2-phosphoglycolate + (2R)-3-phosphoglycerate + 2 H(+). In terms of biological role, ruBisCO catalyzes two reactions: the carboxylation of D-ribulose 1,5-bisphosphate, the primary event in carbon dioxide fixation, as well as the oxidative fragmentation of the pentose substrate in the photorespiration process. Both reactions occur simultaneously and in competition at the same active site. The polypeptide is Ribulose bisphosphate carboxylase large chain (Euglena geniculata).